Consider the following 83-residue polypeptide: Putative membrane protein insertion efficiency factor (83 aa).

The segment at 63–83 (GGNDPVPDHFSLRRNKTDISD) is disordered. Residues 68-83 (VPDHFSLRRNKTDISD) show a composition bias toward basic and acidic residues.

The protein belongs to the UPF0161 family.

It is found in the cell membrane. In terms of biological role, could be involved in insertion of integral membrane proteins into the membrane. This is Putative membrane protein insertion efficiency factor from Streptococcus agalactiae serotype Ia (strain ATCC 27591 / A909 / CDC SS700).